A 137-amino-acid chain; its full sequence is MQKGAKNRLITIIICFCSAVIGVSIILYNLEKSIVFFVPPSKINEVEQGKELRVGGLVKVDSINKIAADKISFVITDNIKDLEIFYQGVLPALFRENQGIIAIGRLSNGKFIARELLAKHDENYRPPNTVIPAKAGI.

The Cytoplasmic portion of the chain corresponds to 1 to 8 (MQKGAKNR). A helical; Signal-anchor for type II membrane protein membrane pass occupies residues 9–29 (LITIIICFCSAVIGVSIILYN). Residues 30–137 (LEKSIVFFVP…NTVIPAKAGI (108 aa)) lie on the Periplasmic side of the membrane. Heme-binding residues include H120 and Y124.

This sequence belongs to the CcmE/CycJ family.

The protein localises to the cell inner membrane. Its function is as follows. Heme chaperone required for the biogenesis of c-type cytochromes. Transiently binds heme delivered by CcmC and transfers the heme to apo-cytochromes in a process facilitated by CcmF and CcmH. This chain is Cytochrome c-type biogenesis protein CcmE, found in Rickettsia bellii (strain OSU 85-389).